The primary structure comprises 310 residues: MDWKGRDVISIRDFSKEDIEFVLKVAERLEEELNEKGSLDYARGKILATLFFEPSTRTRLSFESAMHRLGGSVIGFSSASSTSVKKGESLADTIKTVEQYSDVIVIRHPMEGAARLAAEVAGIPVINAGDGSNQHPTQTLLDLYTIKKAFGKIDGLTIGLLGDLKYGRTVHSLAEALAFYDVELYLISPELLRMPKHIVDELRERGVKVYETTDLEGAIPKLDVLYVTRIQRERFPDEEEYLKVKGSYQVNLEVLKNAKETLKVMHPLPRVDEIHPEVDKTKHALYFRQVFSGVPVRMALLGLTLGVLGV.

Positions 57 and 58 each coordinate carbamoyl phosphate. Lysine 86 serves as a coordination point for L-aspartate. Residues arginine 107, histidine 135, and glutamine 138 each contribute to the carbamoyl phosphate site. Arginine 168 and arginine 229 together coordinate L-aspartate. Carbamoyl phosphate contacts are provided by leucine 268 and proline 269.

This sequence belongs to the aspartate/ornithine carbamoyltransferase superfamily. ATCase family. As to quaternary structure, heterooligomer of catalytic and regulatory chains.

It catalyses the reaction carbamoyl phosphate + L-aspartate = N-carbamoyl-L-aspartate + phosphate + H(+). It participates in pyrimidine metabolism; UMP biosynthesis via de novo pathway; (S)-dihydroorotate from bicarbonate: step 2/3. In terms of biological role, catalyzes the condensation of carbamoyl phosphate and aspartate to form carbamoyl aspartate and inorganic phosphate, the committed step in the de novo pyrimidine nucleotide biosynthesis pathway. In Thermococcus kodakarensis (strain ATCC BAA-918 / JCM 12380 / KOD1) (Pyrococcus kodakaraensis (strain KOD1)), this protein is Aspartate carbamoyltransferase catalytic subunit.